An 84-amino-acid polypeptide reads, in one-letter code: Putative membrane protein insertion efficiency factor (84 aa).

The protein belongs to the UPF0161 family.

Its subcellular location is the cell inner membrane. In terms of biological role, could be involved in insertion of integral membrane proteins into the membrane. The sequence is that of Putative membrane protein insertion efficiency factor from Shewanella amazonensis (strain ATCC BAA-1098 / SB2B).